The primary structure comprises 375 residues: Fasciculation and elongation protein zeta-2 (375 aa).

Residues 1 to 42 are disordered; it reads MAADGDWQDFYEFQEPAGSVRDQENCNASPEAGAGAHAGGDS. 3 positions are modified to phosphoserine: Ser130, Ser171, and Ser190. A coiled-coil region spans residues 156–177; it reads TADQVIEEIEEMMQESPDLEDD. A coiled-coil region spans residues 206–281; that stretch reads ERVKRLSVSE…AKKKKKLKNG (76 aa). The disordered stretch occupies residues 265–297; sequence QKEHKETAKKKKKLKNGSSQNGRNERSHMPGTR.

The protein belongs to the zygin family. As to quaternary structure, homodimer; disulfide-linked. May form heterodimers with FEZ1. Interacts with synaptotagmin.

Involved in axonal outgrowth and fasciculation. This chain is Fasciculation and elongation protein zeta-2 (Fez2), found in Rattus norvegicus (Rat).